Here is a 175-residue protein sequence, read N- to C-terminus: Protein ppBat (175 aa).

Residues Cys74 and Cys111 each coordinate Zn(2+). Riboflavin contacts are provided by Asn161 and Trp164.

Homodimer.

Functionally, binds flavin derivatives, such as lumichrome, riboflavin, FMN, and FAD. May act as a flavin storage protein. Appears to lack proteolytic or chaperone activities. This is Protein ppBat from Bacteroides thetaiotaomicron (strain ATCC 29148 / DSM 2079 / JCM 5827 / CCUG 10774 / NCTC 10582 / VPI-5482 / E50).